We begin with the raw amino-acid sequence, 204 residues long: Holliday junction resolvase RecU (204 aa).

The disordered stretch occupies residues 1 to 24; the sequence is MTIHYPNGQQPVQHYNTHNELPTP. The span at 7-24 shows a compositional bias: polar residues; sequence NGQQPVQHYNTHNELPTP. Mg(2+)-binding residues include Thr-87, Asp-89, Asp-102, and Gln-121.

It belongs to the RecU family. It depends on Mg(2+) as a cofactor.

The protein localises to the cytoplasm. The catalysed reaction is Endonucleolytic cleavage at a junction such as a reciprocal single-stranded crossover between two homologous DNA duplexes (Holliday junction).. Endonuclease that resolves Holliday junction intermediates in genetic recombination. Cleaves mobile four-strand junctions by introducing symmetrical nicks in paired strands. Promotes annealing of linear ssDNA with homologous dsDNA. Required for DNA repair, homologous recombination and chromosome segregation. In Limosilactobacillus reuteri (strain DSM 20016) (Lactobacillus reuteri), this protein is Holliday junction resolvase RecU.